The sequence spans 907 residues: Leucine-rich repeat-containing G-protein coupled receptor 5 (907 aa).

Residues 1 to 21 (MDTSRVRMLLSLLALLQLVAA) form the signal peptide. The Extracellular segment spans residues 22–561 (GSPPRPDTMP…EHLFGSWLIR (540 aa)). The 32-residue stretch at 33–64 (GCPSYCHCELDGRMLLRVDCSDLGLSELPSNL) folds into the LRRNT domain. 2 disulfide bridges follow: cysteine 34–cysteine 40 and cysteine 38–cysteine 52. LRR repeat units lie at residues 44–64 (GRMLLRVDCSDLGLSELPSNL), 65–88 (SVFTSYLDLSMNNISQLPASLLHR), 89–112 (LRFLEELRLAGNALTHIPKGAFAG), 114–136 (HSLKVLMLQNNQLRQVPEEALQN), 137–160 (LRSLQSLRLDANHISYVPPSCFSG), 162–184 (HSLRHLWLDDNALTDVPVQAFRS), 186–208 (SALQAMTLALNKIHHIADHAFGN), 209–232 (LSSLVVLHLHNNRIHSLGKKCFDG), 233–256 (LHSLETLDLNYNNLDEFPTAIKTL), 257–279 (SNLKELGFHSNNIRSIPERAFVG), 281–303 (PSLITIHFYDNPIQFVGISAFQH), 304–327 (LPELRTLTLNGASQITEFPDLTGT), 328–350 (ATLESLTLTGAKISSLPQTVCDQ), 351–375 (LPNLQVLDLSYNLLEDLPSLSGCQK), 377–396 (QKIDLRHNEIYEIKGGTFQQ), 397–420 (LFNLRSLNLARNKIAIIHPNAFST), and 422–444 (PSLIKLDLSSNLLSSFPVTGLHG). 2 N-linked (GlcNAc...) asparagine glycosylation sites follow: asparagine 63 and asparagine 77. Residue asparagine 208 is glycosylated (N-linked (GlcNAc...) asparagine). Cysteine 348 and cysteine 373 form a disulfide bridge. Cysteine 479 and cysteine 541 are oxidised to a cystine. Residues 562–582 (IGVWTTAVLALSCNALVAFTV) traverse the membrane as a helical segment. The LRR 18 repeat unit spans residues 564-585 (VWTTAVLALSCNALVAFTVFRT). Topologically, residues 583 to 595 (FRTPLYISSIKLL) are cytoplasmic. Residues 596–616 (IGVIAVVDILMGVSSAILAVV) form a helical membrane-spanning segment. The Extracellular portion of the chain corresponds to 617–638 (DTFTFGSFAQHGAWWEGGIGCQ). Cysteine 637 and cysteine 712 form a disulfide bridge. A helical transmembrane segment spans residues 639 to 659 (IVGFLSIFASESSVFLLTLAA). Topologically, residues 660–682 (LERGFSVKCSSKFEMKAPLSSLK) are cytoplasmic. Residues 683–703 (AIILLCVLLALTIATVPLLGG) traverse the membrane as a helical segment. The Extracellular portion of the chain corresponds to 704–723 (SEYNASPLCLPLPFGEPSTT). The helical transmembrane segment at 724–744 (GYMVALVLLNSLCFLIMTIAY) threads the bilayer. Residues 745–775 (TRLYCSLEKGELENLWDCSMVKHTALLLFTN) lie on the Cytoplasmic side of the membrane. Residues 776–796 (CILYCPVAFLSFSSLLNLTFI) traverse the membrane as a helical segment. Residues 797 to 802 (SPEVIK) are Extracellular-facing. Residues 803–823 (FILLVIVPLPACLNPLLYIVF) form a helical membrane-spanning segment. Topologically, residues 824–907 (NPHFKEDMGS…LSSVAFVPCL (84 aa)) are cytoplasmic.

It belongs to the G-protein coupled receptor 1 family. As to quaternary structure, identified in a complex composed of RNF43, LGR5 and RSPO1. Also interacts with other R-spondin ligands, including RSPO2, RSPO3 and RSPO4.

It localises to the cell membrane. Its subcellular location is the golgi apparatus. The protein resides in the trans-Golgi network membrane. Functionally, receptor for R-spondins that potentiates the canonical Wnt signaling pathway and acts as a stem cell marker of the intestinal epithelium and the hair follicle. Upon binding to R-spondins (RSPO1, RSPO2, RSPO3 or RSPO4), associates with phosphorylated LRP6 and frizzled receptors that are activated by extracellular Wnt receptors, triggering the canonical Wnt signaling pathway to increase expression of target genes. In contrast to classical G-protein coupled receptors, does not activate heterotrimeric G-proteins to transduce the signal. Involved in the development and/or maintenance of the adult intestinal stem cells during postembryonic development. The sequence is that of Leucine-rich repeat-containing G-protein coupled receptor 5 (Lgr5) from Rattus norvegicus (Rat).